A 311-amino-acid chain; its full sequence is MSNSIVIQTSSTVIEDMKQQYKHSLSPKTPQGGIFMAKVPSCTITAYKSGKVMFQGGRAEAEAARWQTVSQTPKTAVKKSVDSHRYAPPASIGTMSIVGSDEVGTGDFFGPMTVVAVYVDAKQIPLLKELGVKDSKNLNDEQITAIAKQLLHVVPYSSLVLHNEKYNELFDKGNNQGKLKALLHNKAITNLLAKIAPTKPEGVLIDQFTQPDTYYKYLAKQKQVQRENVYFATKGESVHLAVAAASILARYSFVKQFDELSKKAGMPLPKGAGKQVDIAAAKLIQKLGKERLPEFVKLHFANTEKAFRLLK.

Residues M95–K311 form the RNase H type-2 domain. The a divalent metal cation site is built by D101, E102, and D206.

This sequence belongs to the RNase HII family. RnhC subfamily. It depends on Mn(2+) as a cofactor. Requires Mg(2+) as cofactor.

It localises to the cytoplasm. It carries out the reaction Endonucleolytic cleavage to 5'-phosphomonoester.. Functionally, endonuclease that specifically degrades the RNA of RNA-DNA hybrids. The sequence is that of Ribonuclease HIII from Bacillus cereus (strain ATCC 10987 / NRS 248).